We begin with the raw amino-acid sequence, 349 residues long: Ribosomal RNA small subunit methyltransferase C (349 aa).

The protein belongs to the methyltransferase superfamily. RsmC family. In terms of assembly, monomer.

The protein resides in the cytoplasm. It catalyses the reaction guanosine(1207) in 16S rRNA + S-adenosyl-L-methionine = N(2)-methylguanosine(1207) in 16S rRNA + S-adenosyl-L-homocysteine + H(+). Specifically methylates the guanine in position 1207 of 16S rRNA in the 30S particle. The sequence is that of Ribosomal RNA small subunit methyltransferase C from Psychromonas ingrahamii (strain DSM 17664 / CCUG 51855 / 37).